Reading from the N-terminus, the 20-residue chain is Unknown protein from 2D-PAGE (20 aa).

This is Unknown protein from 2D-PAGE from Nicotiana tabacum (Common tobacco).